The chain runs to 339 residues: Glycerol-3-phosphate dehydrogenase [NAD(P)+] (339 aa).

NADPH contacts are provided by Ser-15, Tyr-16, His-36, and Lys-110. Sn-glycerol 3-phosphate-binding residues include Lys-110, Gly-139, and Thr-141. An NADPH-binding site is contributed by Ala-143. Residues Lys-195, Asp-248, Ser-258, Arg-259, and Asn-260 each coordinate sn-glycerol 3-phosphate. Lys-195 serves as the catalytic Proton acceptor. An NADPH-binding site is contributed by Arg-259. Residues Val-283 and Glu-285 each contribute to the NADPH site.

Belongs to the NAD-dependent glycerol-3-phosphate dehydrogenase family.

It is found in the cytoplasm. The enzyme catalyses sn-glycerol 3-phosphate + NAD(+) = dihydroxyacetone phosphate + NADH + H(+). It carries out the reaction sn-glycerol 3-phosphate + NADP(+) = dihydroxyacetone phosphate + NADPH + H(+). It functions in the pathway membrane lipid metabolism; glycerophospholipid metabolism. Catalyzes the reduction of the glycolytic intermediate dihydroxyacetone phosphate (DHAP) to sn-glycerol 3-phosphate (G3P), the key precursor for phospholipid synthesis. The protein is Glycerol-3-phosphate dehydrogenase [NAD(P)+] of Pectobacterium atrosepticum (strain SCRI 1043 / ATCC BAA-672) (Erwinia carotovora subsp. atroseptica).